A 240-amino-acid polypeptide reads, in one-letter code: Aspartate/glutamate leucyltransferase (240 aa).

Belongs to the R-transferase family. Bpt subfamily.

The protein resides in the cytoplasm. It carries out the reaction N-terminal L-glutamyl-[protein] + L-leucyl-tRNA(Leu) = N-terminal L-leucyl-L-glutamyl-[protein] + tRNA(Leu) + H(+). It catalyses the reaction N-terminal L-aspartyl-[protein] + L-leucyl-tRNA(Leu) = N-terminal L-leucyl-L-aspartyl-[protein] + tRNA(Leu) + H(+). Its function is as follows. Functions in the N-end rule pathway of protein degradation where it conjugates Leu from its aminoacyl-tRNA to the N-termini of proteins containing an N-terminal aspartate or glutamate. The sequence is that of Aspartate/glutamate leucyltransferase from Gluconobacter oxydans (strain 621H) (Gluconobacter suboxydans).